Consider the following 265-residue polypeptide: Ubiquinone biosynthesis protein COQ4 homolog, mitochondrial (265 aa).

Residues methionine 1–arginine 30 constitute a mitochondrion transit peptide. Serine 108 bears the Phosphoserine mark. Zn(2+) is bound by residues histidine 163, aspartate 164, histidine 167, and glutamate 179.

The protein belongs to the COQ4 family. Component of a multi-subunit COQ enzyme complex, composed of at least COQ3, COQ4, COQ5, COQ6, COQ7 and COQ9. It depends on Zn(2+) as a cofactor. As to expression, expressed ubiquitously, but at high levels in liver, lung and pancreas.

The protein localises to the mitochondrion inner membrane. It catalyses the reaction 4-hydroxy-3-methoxy-5-(all-trans-decaprenyl)benzoate + H(+) = 2-methoxy-6-(all-trans-decaprenyl)phenol + CO2. The protein operates within cofactor biosynthesis; ubiquinone biosynthesis. Lyase that catalyzes the C1-decarboxylation of 4-hydroxy-3-methoxy-5-(all-trans-decaprenyl)benzoic acid into 2-methoxy-6-(all-trans-decaprenyl)phenol during ubiquinone biosynthesis. The polypeptide is Ubiquinone biosynthesis protein COQ4 homolog, mitochondrial (Homo sapiens (Human)).